The sequence spans 35 residues: Thionin NsW1 (35 aa).

3 disulfide bridges follow: C4–C32, C12–C30, and C16–C26.

Post-translationally, contains 4 disulfide bonds.

Its subcellular location is the secreted. Antimicrobial peptide disrupting membranes. Has antibacterial against Gram-positive bacteria S.aureus (MIC=6.5 uM) and B.subtilis (MIC=3.25 uM) but not against Gram-negative bacterium E.coli. Has antifungal activity against C.albicans (MIC=1.63 uM). The polypeptide is Thionin NsW1 (Nigella sativa (Black cumin)).